The primary structure comprises 370 residues: Cysteine-type anaerobic sulfatase-maturating enzyme (370 aa).

The Radical SAM core domain maps to 1 to 227 (MPPLSLLIKP…LKNLFDLWYE (227 aa)). [4Fe-4S] cluster contacts are provided by Cys15 and Cys19. Tyr21 serves as a coordination point for S-adenosyl-L-methionine. Cys22 lines the [4Fe-4S] cluster pocket. Positions 66, 122, 134, and 195 each coordinate S-adenosyl-L-methionine. The [4Fe-4S] cluster site is built by Cys255, Cys261, and Cys276. The active-site Proton acceptor is Asp277. [4Fe-4S] cluster is bound by residues Cys317, Cys320, Cys326, Cys330, and Cys348.

It belongs to the radical SAM superfamily. Anaerobic sulfatase-maturating enzyme family. The cofactor is [4Fe-4S] cluster.

The catalysed reaction is L-cysteinyl-[sulfatase] + S-adenosyl-L-methionine + H2O = 3-oxo-L-alanyl-[sulfatase] + hydrogen sulfide + 5'-deoxyadenosine + L-methionine + 2 H(+). Its pathway is protein modification; sulfatase oxidation. In terms of biological role, involved in 'Cys-type' sulfatase maturation under anaerobic conditions. Catalyzes the post-translational modification of cysteine into 3-oxoalanine (also known as C(alpha)-formylglycine (FGly)), by a free radical chemical mechanism initiated via the reductive cleavage of S-adenosyl-L-methionine (SAM). The protein is Cysteine-type anaerobic sulfatase-maturating enzyme of Clostridium perfringens (strain 13 / Type A).